Here is a 291-residue protein sequence, read N- to C-terminus: Phosphoribulokinase (291 aa).

12 to 20 provides a ligand contact to ATP; it reads GSSGAGTTS.

Belongs to the phosphoribulokinase family. As to quaternary structure, homooctamer.

The catalysed reaction is D-ribulose 5-phosphate + ATP = D-ribulose 1,5-bisphosphate + ADP + H(+). It functions in the pathway carbohydrate biosynthesis; Calvin cycle. The chain is Phosphoribulokinase (cbbP) from Xanthobacter flavus.